We begin with the raw amino-acid sequence, 216 residues long: Regulatory protein RecX (216 aa).

The protein belongs to the RecX family.

The protein localises to the cytoplasm. Its function is as follows. Modulates RecA activity. The chain is Regulatory protein RecX from Clostridium tetani (strain Massachusetts / E88).